Reading from the N-terminus, the 237-residue chain is tRNA(His) guanylyltransferase (237 aa).

The Mg(2+) site is built by Asp-29, Gly-30, and Asp-77. GTP contacts are provided by residues 29-34 (DGKKFH) and 76-77 (SD).

This sequence belongs to the tRNA(His) guanylyltransferase family. Mg(2+) is required as a cofactor.

It carries out the reaction a 5'-end ribonucleotide-tRNA(His) + GTP + ATP + H2O = a 5'-end phospho-guanosine-ribonucleotide-tRNA(His) + AMP + 2 diphosphate + H(+). Functionally, adds a GMP to the 5'-end of tRNA(His) after transcription and RNase P cleavage. This chain is tRNA(His) guanylyltransferase (THG1), found in Kluyveromyces lactis (strain ATCC 8585 / CBS 2359 / DSM 70799 / NBRC 1267 / NRRL Y-1140 / WM37) (Yeast).